The following is a 380-amino-acid chain: uncharacterized protein (380 aa).

An N-terminal signal peptide occupies residues 1–28 (MQFLSDTQRMVLSRAVCASFFFFHVAVA). In terms of domain architecture, SPOR spans 307–380 (AGDEKPRGYQ…DAGYETFPLF (74 aa)).

This is an uncharacterized protein from Treponema pallidum (strain Nichols).